Reading from the N-terminus, the 529-residue chain is Probable anion transporter 1, chloroplastic (529 aa).

Residues 1–55 constitute a chloroplast transit peptide; that stretch reads MLYLLPLSVSCRVPGSPPAPRSRRFLDPGGGRGVGDGLGGVRVFRRRALRGTDVR. Disordered regions lie at residues 13–39 and 52–78; these read VPGS…DGLG and TDVR…GGYG. A compositionally biased stretch (gly residues) spans 28 to 39; it reads PGGGRGVGDGLG. The segment covering 67-76 has biased composition (basic and acidic residues); sequence RHDDARHDGG. 11 helical membrane-spanning segments follow: residues 120–140, 158–178, 187–207, 209–229, 251–271, 274–294, 340–360, 378–398, 418–438, 469–489, and 503–523; these read WAIV…RVNM, VGLI…AGGI, TVLG…PFAA, LGLP…GVAM, LVYS…PLLI, FGWP…FSTW, VWAL…LLTW, LFCV…GWIA, IGFL…SPAM, AGVL…FGTA, and VFKV…LFST.

The protein belongs to the major facilitator superfamily. Sodium/anion cotransporter (TC 2.A.1.14) family.

The protein resides in the plastid. The protein localises to the chloroplast membrane. In terms of biological role, probable anion transporter. In Oryza sativa subsp. japonica (Rice), this protein is Probable anion transporter 1, chloroplastic (PHT4;1).